The primary structure comprises 1079 residues: MEDEAVLDRGASFLKHVCDEEEVEGHHTIYIGVHVPKSYRRRRRHKRKTGHKEKREKERISENYSDKSDVENADESSSSILKPLISPAAERIRFILGEEDDSPAPPQLFTELDELLAVDGQEMEWKETARWIKFEEKVEQGGERWSKPHVATLSLHSLFELRTCMEKGSIMLDREATSLPQLVEMIVDHQIETGLLKPDLKDKVTYTLLRKHRHQTKKSNLRSLADIGKTVSSASRMFTSPDNGSPAMTHRNLTSSSLNDISDKPEKDQLKNKFMKKLPRDAEASNVLVGEVDFLDTPFIAFVRLQQAVMLGALTEVPVPTRFLFILLGPKGKAKSYHEIGRAIATLMSDEVFHDIAYKAKDRHDLIAGIDEFLDEVIVLPPGEWDPAIRIEPPKSLPSSDKRKNMYSGGENVQMNGDTPHDGGHGGGGHADCEELQRTGRFCGGLIKDLKRKAPFFASDFYDALNIQSLSAILFIYLATVTNAITFGGLLGDATDNMQGVLESFLGTAVSGAIFCLFAGQPLTILSSTGPVLVFERLLFNFSKDHNFDYLEFRLWIGLWSAFLCLILVATDASFLVQYFTRFTEEGFSSLISFIFIYDAFKKMIKLADYYPINSDFKVGYNTFFSCACVPPDPVNISIANDTTPAPQELSAVSSTDMHQNATFDWAFLSKKECLRYGGKLVGNNCNFVPDVTLMSFILFLGTYTSSMALKKFKTSRYFPTTARKLISDFAIILSILIFCVIDALVGVDTPKLIVPSEFKPTSPNRGWFVPPFGGNPWWVYLAAAIPALLVTILIFMDQQITAVIVNRKEHKLKKGAGYHLDLFWVAILMVVCSFMALPWYVAATVISIAHIDSLKMETETSAPGEQPKFLGVREQRVTGTLVFILTGLSVFMAPILKFIPMPVLYGVFLYMGVASLNGVQFMDRLKLLLMPLKHQPDFIYLRHVPLRRVHLFTFLQVLCLALLWILKSTVAAIIFPVMILALVAVRKGMDYLFSQHDLSFLDDVIPEKDKKKKEDEKKKKKKKGSLDSDNDDSDCPYSEKVPSIKIPMDIMEQQPFLSESKPSDREKSSTFLERHTSC.

The interval 1–62 (MEDEAVLDRG…EKREKERISE (62 aa)) is required for interaction with AHCYL1. At 1–466 (MEDEAVLDRG…FASDFYDALN (466 aa)) the chain is on the cytoplasmic side. A Phosphotyrosine modification is found at Tyr30. The segment covering 39 to 52 (YRRRRRHKRKTGHK) has biased composition (basic residues). The tract at residues 39–78 (YRRRRRHKRKTGHKEKREKERISENYSDKSDVENADESSS) is disordered. Thr49 is modified (phosphothreonine; by PKA). A compositionally biased stretch (basic and acidic residues) spans 53-70 (EKREKERISENYSDKSDV). 7 positions are modified to phosphoserine: Ser61, Ser65, Ser68, Ser223, Ser232, Ser233, and Ser245. The tract at residues 237-265 (MFTSPDNGSPAMTHRNLTSSSLNDISDKP) is disordered. Phosphothreonine is present on residues Thr249 and Thr254. The span at 251–260 (RNLTSSSLND) shows a compositional bias: polar residues. A phosphoserine mark is found at Ser256, Ser257, and Ser262. A helical membrane pass occupies residues 467-491 (IQSLSAILFIYLATVTNAITFGGLL). At 492–501 (GDATDNMQGV) the chain is on the extracellular side. A helical transmembrane segment spans residues 502–520 (LESFLGTAVSGAIFCLFAG). Gln521 is a topological domain (cytoplasmic). A discontinuously helical transmembrane segment spans residues 522-542 (PLTILSSTGPVLVFERLLFNF). The Extracellular portion of the chain corresponds to 543-550 (SKDHNFDY). A helical membrane pass occupies residues 551-571 (LEFRLWIGLWSAFLCLILVAT). The Cytoplasmic segment spans residues 572–585 (DASFLVQYFTRFTE). A helical transmembrane segment spans residues 586–609 (EGFSSLISFIFIYDAFKKMIKLAD). Residues 610–692 (YYPINSDFKV…GNNCNFVPDV (83 aa)) lie on the Extracellular side of the membrane. Residues 693–710 (TLMSFILFLGTYTSSMAL) form a helical membrane-spanning segment. The Cytoplasmic portion of the chain corresponds to 711 to 725 (KKFKTSRYFPTTARK). The chain crosses the membrane as a helical span at residues 726–745 (LISDFAIILSILIFCVIDAL). Residues 746 to 779 (VGVDTPKLIVPSEFKPTSPNRGWFVPPFGGNPWW) are Extracellular-facing. An interaction with CA4 region spans residues 748–779 (VDTPKLIVPSEFKPTSPNRGWFVPPFGGNPWW). The chain crosses the membrane as a helical span at residues 780-807 (VYLAAAIPALLVTILIFMDQQITAVIVN). Residues 808–819 (RKEHKLKKGAGY) lie on the Cytoplasmic side of the membrane. A helical transmembrane segment spans residues 820 to 836 (HLDLFWVAILMVVCSFM). Ala837 is a topological domain (extracellular). A discontinuously helical transmembrane segment spans residues 838–855 (LPWYVAATVISIAHIDSL). At 856–877 (KMETETSAPGEQPKFLGVREQR) the chain is on the cytoplasmic side. The chain crosses the membrane as a helical span at residues 878–894 (VTGTLVFILTGLSVFMA). Residues 895 to 901 (PILKFIP) are Extracellular-facing. A helical transmembrane segment spans residues 902–918 (MPVLYGVFLYMGVASLN). The Cytoplasmic segment spans residues 919–960 (GVQFMDRLKLLLMPLKHQPDFIYLRHVPLRRVHLFTFLQVLC). Positions 961-986 (LALLWILKSTVAAIIFPVMILALVAV) form an intramembrane region, discontinuously helical. The Cytoplasmic portion of the chain corresponds to 987–1079 (RKGMDYLFSQ…STFLERHTSC (93 aa)). The tract at residues 1002–1004 (LDD) is CA2-binding. Residues 1012 to 1079 (KKKEDEKKKK…STFLERHTSC (68 aa)) form a disordered region. The residue at position 1026 (Ser1026) is a Phosphoserine; by PKA. Position 1029 is a phosphoserine (Ser1029). Residues 1030-1033 (DNDD) are CA2-binding. Phosphoserine is present on residues Ser1034 and Ser1044. Positions 1057 to 1059 (FLS) are required for basolateral targeting. Basic and acidic residues predominate over residues 1062–1079 (KPSDREKSSTFLERHTSC). Phosphoserine is present on Ser1069.

It belongs to the anion exchanger (TC 2.A.31) family. Homodimer. Interacts with CA2/carbonic anhydrase 2 and CA4/carbonic anhydrase 4 which may regulate transporter activity. Isoform 1 but not isoform 2 interacts with AHCYL1 (via PEST domain when phosphorylated); the interaction increases SLC4A4 isoform 1 activity. Interacts with AHCYL2. In terms of processing, phosphorylation of Ser-1026 by PKA increases the binding of CA2 and changes the Na(+):HCO3(-) stoichiometry of the transporter from 3:1 to 2:1. Phosphorylated in presence of STK39 and dephosphorylated in presence of PP1 phosphatase; phosphorylation seems to inhibit SLC4A4 activity. N-glycosylated. May not be necessary for the transporter basic functions. As to expression, expressed in colonic mucosa, kidney cortex and to gastric mucosa.

It localises to the basolateral cell membrane. It is found in the cell membrane. It carries out the reaction 2 hydrogencarbonate(out) + Na(+)(out) = 2 hydrogencarbonate(in) + Na(+)(in). It catalyses the reaction 3 hydrogencarbonate(out) + Na(+)(out) = 3 hydrogencarbonate(in) + Na(+)(in). Functionally, electrogenic sodium/bicarbonate cotransporter with a Na(+):HCO3(-) stoichiometry varying from 1:2 to 1:3. May regulate bicarbonate influx/efflux at the basolateral membrane of cells and regulate intracellular pH. The sequence is that of Electrogenic sodium bicarbonate cotransporter 1 (SLC4A4) from Oryctolagus cuniculus (Rabbit).